A 104-amino-acid chain; its full sequence is PTS system lactose-specific EIIA component (104 aa).

A PTS EIIA type-3 domain is found at 4-102; the sequence is EEATLLGFEI…MKHLIELYKR (99 aa). The active-site Tele-phosphohistidine intermediate is H78. Position 78 is a phosphohistidine; by HPr (H78). Mg(2+) is bound at residue D81.

Homotrimer. It depends on Mg(2+) as a cofactor.

It is found in the cytoplasm. In terms of biological role, the phosphoenolpyruvate-dependent sugar phosphotransferase system (sugar PTS), a major carbohydrate active transport system, catalyzes the phosphorylation of incoming sugar substrates concomitantly with their translocation across the cell membrane. The enzyme II LacEF PTS system is involved in lactose transport. The chain is PTS system lactose-specific EIIA component from Streptococcus mutans serotype c (strain ATCC 700610 / UA159).